The sequence spans 240 residues: Homeobox-leucine zipper protein HOX14 (240 aa).

The disordered stretch occupies residues 26-64 (SGEVQGERPRARRRRRRGARCVGGGGGGGEVDGGDPKKR). A compositionally biased stretch (basic residues) spans 35–44 (RARRRRRRGA). Residues 46–56 (CVGGGGGGGEV) are compositionally biased toward gly residues. The segment at residues 59–118 (GDPKKRRLSDEQVEMLELSFREERKLETGRKVHLASELGLDPKQVAVWFQNRRARHKSKL) is a DNA-binding region (homeobox). Residues 108 to 167 (QNRRARHKSKLLEEEFSKLKHAHDAAILHKCHLENEVLRLKERLVVAEEEVRRLRSAAGS) adopt a coiled-coil conformation.

This sequence belongs to the HD-ZIP homeobox family. Class I subfamily. As to expression, expressed in roots, stems, leaf blades and panicles.

The protein localises to the nucleus. Functionally, probable transcription factor. The polypeptide is Homeobox-leucine zipper protein HOX14 (HOX14) (Oryza sativa subsp. japonica (Rice)).